We begin with the raw amino-acid sequence, 168 residues long: Photosystem I assembly protein Ycf3 (168 aa).

TPR repeat units follow at residues 35-68 (AFTY…EIDP), 72-105 (SYIL…NPFL), and 120-153 (GEQA…TPGN).

It belongs to the Ycf3 family.

It localises to the plastid. The protein localises to the chloroplast thylakoid membrane. Essential for the assembly of the photosystem I (PSI) complex. May act as a chaperone-like factor to guide the assembly of the PSI subunits. This is Photosystem I assembly protein Ycf3 from Solanum bulbocastanum (Wild potato).